Reading from the N-terminus, the 106-residue chain is COX assembly mitochondrial protein homolog (106 aa).

Ala2 carries the N-acetylalanine modification. The CHCH domain occupies 28 to 71 (RERCSEQVEDFTRCCKDSGILMVLKCRKENSALKDCLTAYYNDP). Short sequence motifs (cx9C motif) lie at residues 31–41 (CSEQVEDFTRC) and 53–63 (CRKENSALKDC). Disulfide bonds link Cys31/Cys63 and Cys41/Cys53.

It belongs to the CMC family. In terms of assembly, component of the MITRAC (mitochondrial translation regulation assembly intermediate of cytochrome c oxidase complex) complex, the core components of this complex being COA3/MITRAC12 and COX14.

Its subcellular location is the mitochondrion. Component of the MITRAC (mitochondrial translation regulation assembly intermediate of cytochrome c oxidase complex) complex, that regulates cytochrome c oxidase assembly. This is COX assembly mitochondrial protein homolog (Cmc1) from Mus musculus (Mouse).